The primary structure comprises 730 residues: Elongation factor 2 (730 aa).

The 210-residue stretch at 19 to 228 (TKIRNIGIVA…TGVSFKDVYD (210 aa)) folds into the tr-type G domain. GTP-binding positions include 28 to 35 (AHIDHGKT), 94 to 98 (DTPGH), and 148 to 151 (NKVD). Position 596 is a diphthamide (histidine 596).

This sequence belongs to the TRAFAC class translation factor GTPase superfamily. Classic translation factor GTPase family. EF-G/EF-2 subfamily.

It localises to the cytoplasm. Functionally, catalyzes the GTP-dependent ribosomal translocation step during translation elongation. During this step, the ribosome changes from the pre-translocational (PRE) to the post-translocational (POST) state as the newly formed A-site-bound peptidyl-tRNA and P-site-bound deacylated tRNA move to the P and E sites, respectively. Catalyzes the coordinated movement of the two tRNA molecules, the mRNA and conformational changes in the ribosome. The chain is Elongation factor 2 from Methanosarcina barkeri (strain Fusaro / DSM 804).